Here is a 476-residue protein sequence, read N- to C-terminus: Protein transport protein Sec61 subunit alpha isoform A (476 aa).

Residues 2 to 33 are Cytoplasmic-facing; that stretch reads GIKFLEVIKPFCAVLPEIQKPERKIQFREKVL. Residues 34 to 53 form a helical membrane-spanning segment; it reads WTAITLFIFLVCCQIPLFGI. The Lumenal portion of the chain corresponds to 54 to 76; the sequence is MSSDSADPFYWMRVILASNRGTL. A helical membrane pass occupies residues 77 to 96; the sequence is MELGISPIVTSGLIMQLLAG. The Cytoplasmic segment spans residues 97–117; the sequence is AKIIEVGDTPKDRALFNGAQK. The chain crosses the membrane as a helical span at residues 118-138; the sequence is LFGMIITIGQSIVYVMTGMYG. The Lumenal portion of the chain corresponds to 139–144; sequence DPSEMG. A helical transmembrane segment spans residues 145–165; that stretch reads AGICLLIIIQLFVAGLIVLLL. At 166 to 172 the chain is on the cytoplasmic side; that stretch reads DELLQKG. Residues 173–193 traverse the membrane as a helical segment; the sequence is YGLGSGISLFIATNICETIVW. Residues 194 to 240 are Lumenal-facing; that stretch reads KAFSPTTVNTGRGTEFEGAIIALFHLLATRTDKVRALREAFYRQNLP. A helical transmembrane segment spans residues 241 to 261; the sequence is NLLNLIATVFVFAVVIYFQGF. Residues 262 to 288 lie on the Cytoplasmic side of the membrane; it reads RVDLPIKSARYRGQYNTYPIKLFYTSN. Residues 289-309 form a helical membrane-spanning segment; the sequence is IPIILQSALVSNLYVISQMLS. Residues 310-354 are Lumenal-facing; sequence TRFSGNFLVNLLGTWSDTSTGGPARAYPVGGLCYFLSPPESFGSV. Residues 355–375 form a helical membrane-spanning segment; it reads LDDPIHAAIYIVFMLGSCAFF. At 376–420 the chain is on the cytoplasmic side; it reads SKTWIEVSGSSAKDVAKQLKEQQMVMGGHRETSMVHELNRYIPTA. The chain crosses the membrane as a helical span at residues 421–441; that stretch reads AAFGGLCIGGLSVMADFLGAI. Topologically, residues 442–445 are lumenal; the sequence is GSGT. Residues 446–462 form a helical membrane-spanning segment; sequence GILLAVTIIYQYFEIFV. Residues 463 to 476 lie on the Cytoplasmic side of the membrane; the sequence is KEQSEMGSMGALLF.

It belongs to the SecY/SEC61-alpha family. The SEC61 channel-forming translocon complex consists of channel-forming core components SEC61A1, SEC61B and SEC61G and different auxiliary components such as SEC62 and SEC63. The SEC61 channel associates with the multi-pass translocon (MPT) complex.

Its subcellular location is the endoplasmic reticulum membrane. Its function is as follows. Component of SEC61 channel-forming translocon complex that mediates transport of signal peptide-containing precursor polypeptides across the endoplasmic reticulum (ER). Forms a ribosome receptor and a gated pore in the ER membrane, both functions required for cotranslational translocation of nascent polypeptides. May cooperate with auxiliary protein SEC62, SEC63 and HSPA5/BiP to enable post-translational transport of small presecretory proteins. The SEC61 channel is also involved in ER membrane insertion of transmembrane proteins: it mediates membrane insertion of the first few transmembrane segments of proteins, while insertion of subsequent transmembrane regions of multi-pass membrane proteins is mediated by the multi-pass translocon (MPT) complex. This chain is Protein transport protein Sec61 subunit alpha isoform A (sec61aa), found in Oncorhynchus mykiss (Rainbow trout).